The following is a 153-amino-acid chain: Spanin, inner membrane subunit (153 aa).

Residues 1-3 lie on the Cytoplasmic side of the membrane; the sequence is MSR. Residues 4 to 24 traverse the membrane as a helical; Signal-anchor for type II membrane protein segment; it reads VTAIISALVICIIVCLSWAVN. Topologically, residues 25–153 are periplasmic; the sequence is HYRDNAITYK…TQKYINEQCR (129 aa). The stretch at 65 to 92 forms a coiled coil; that stretch reads DAKYTKELADAKAENDALRDDVAAGRRR.

Belongs to the Lambdavirus i-spanin family. As to quaternary structure, homodimer; disulfide-linked. Interacts (via C-terminus) with the spanin outer lipoprotein subunit (via C-terminus). Part of the spanin complex which spans the entire periplasmic space. The spanin complex is composed of one homodimer of the i-spanin linked by intermolecular disulfide bonds involving two Cys residues and one homodimer of the o-spanin covalently linked by an intermolecular disulfide bond involving one Cys.

Its subcellular location is the host cell inner membrane. Functionally, component of the spanin complex that disrupts the host outer membrane and participates in cell lysis during virus exit. The spanin complex conducts the final step in host lysis by disrupting the outer membrane after holin and endolysin have permeabilized the inner membrane and degraded the host peptidoglycans. Host outer membrane disruption is due to local fusion between the inner and outer membrane performed by the spanin complex. The chain is Spanin, inner membrane subunit (Rz) from Escherichia phage lambda (Bacteriophage lambda).